The primary structure comprises 493 residues: Cobyric acid synthase (493 aa).

The 195-residue stretch at 261–455 (HTRIAVVAYP…LHGLFEDAAV (195 aa)) folds into the GATase cobBQ-type domain. C342 serves as the catalytic Nucleophile. H447 is an active-site residue.

The protein belongs to the CobB/CobQ family. CobQ subfamily.

It functions in the pathway cofactor biosynthesis; adenosylcobalamin biosynthesis. Functionally, catalyzes amidations at positions B, D, E, and G on adenosylcobyrinic A,C-diamide. NH(2) groups are provided by glutamine, and one molecule of ATP is hydrogenolyzed for each amidation. In Acidovorax sp. (strain JS42), this protein is Cobyric acid synthase.